The chain runs to 498 residues: Envelope glycoprotein G (498 aa).

The N-terminal stretch at 1-20 is a signal peptide; it reads MKWATWILALGLLVVRTVVA. 4 N-linked (GlcNAc...) asparagine; by host glycosylation sites follow: asparagine 56, asparagine 86, asparagine 142, and asparagine 226. 2 consecutive repeat copies span residues 271-292 and 308-329. The 2 X 22 AA repeats of E-E-[DE]-[AE]-E-L-T-S-S-D-L-D-N-I-E-I-E-V-V-G-S-P stretch occupies residues 271 to 329; that stretch reads EEEAELTSSDLDNIEIEVVGSPAAPAEGPATEEGRGAEEDEELTSSDLDNIEIEVVGSP. The segment at 290–377 is disordered; the sequence is GSPAAPAEGP…HRLPPEPTFV (88 aa). A compositionally biased stretch (low complexity) spans 292-301; it reads PAAPAEGPAT. The span at 308–322 shows a compositional bias: acidic residues; sequence EEDEELTSSDLDNIE. The segment covering 329-342 has biased composition (pro residues); it reads PRPPASSPPPPPPR. Basic and acidic residues predominate over residues 346–364; sequence RGRDHDHDHGHHRADDRGP. The N-linked (GlcNAc...) asparagine; by host glycan is linked to asparagine 443. A helical transmembrane segment spans residues 463-483; it reads VALAGLVVVGIVIMCLHMAII.

It belongs to the alphaherpesvirinae glycoprotein G family.

The protein resides in the virion membrane. Its function is as follows. Chemokine-binding protein that inhibits neutrophils' chemotaxis. This Sus scrofa (Pig) protein is Envelope glycoprotein G (gG).